The sequence spans 318 residues: Replication factor C small subunit (318 aa).

43–50 contacts ATP; it reads GPAGTGKT.

The protein belongs to the activator 1 small subunits family. RfcS subfamily. In terms of assembly, heteromultimer composed of small subunits (RfcS) and large subunits (RfcL).

In terms of biological role, part of the RFC clamp loader complex which loads the PCNA sliding clamp onto DNA. This is Replication factor C small subunit from Picrophilus torridus (strain ATCC 700027 / DSM 9790 / JCM 10055 / NBRC 100828 / KAW 2/3).